Reading from the N-terminus, the 302-residue chain is Putative S-adenosyl-L-methionine-dependent methyltransferase MAV_2803 (302 aa).

S-adenosyl-L-methionine contacts are provided by residues Asp-129 and 158-159; that span reads DL.

The protein belongs to the UPF0677 family.

In terms of biological role, exhibits S-adenosyl-L-methionine-dependent methyltransferase activity. This Mycobacterium avium (strain 104) protein is Putative S-adenosyl-L-methionine-dependent methyltransferase MAV_2803.